Reading from the N-terminus, the 123-residue chain is Small ribosomal subunit protein uS12 (123 aa).

Residues 1–28 form a disordered region; it reads MPTIQQLIRKPREPKRVRSKSQHLESCP. Asp-89 is modified (3-methylthioaspartic acid).

It belongs to the universal ribosomal protein uS12 family. As to quaternary structure, part of the 30S ribosomal subunit. Contacts proteins S8 and S17. May interact with IF1 in the 30S initiation complex.

With S4 and S5 plays an important role in translational accuracy. Functionally, interacts with and stabilizes bases of the 16S rRNA that are involved in tRNA selection in the A site and with the mRNA backbone. Located at the interface of the 30S and 50S subunits, it traverses the body of the 30S subunit contacting proteins on the other side and probably holding the rRNA structure together. The combined cluster of proteins S8, S12 and S17 appears to hold together the shoulder and platform of the 30S subunit. The chain is Small ribosomal subunit protein uS12 from Cereibacter sphaeroides (strain ATCC 17029 / ATH 2.4.9) (Rhodobacter sphaeroides).